Reading from the N-terminus, the 95-residue chain is Cobalt transport protein CbiN (95 aa).

2 helical membrane passes run 5–25 and 67–87; these read HIIL…IYAG and LLFA…IGYY.

Belongs to the CbiN family. Forms an energy-coupling factor (ECF) transporter complex composed of an ATP-binding protein (A component, CbiO), a transmembrane protein (T component, CbiQ) and 2 possible substrate-capture proteins (S components, CbiM and CbiN) of unknown stoichimetry.

It localises to the cell membrane. Its pathway is cofactor biosynthesis; adenosylcobalamin biosynthesis. Part of the energy-coupling factor (ECF) transporter complex CbiMNOQ involved in cobalt import. This is Cobalt transport protein CbiN from Methanocaldococcus jannaschii (strain ATCC 43067 / DSM 2661 / JAL-1 / JCM 10045 / NBRC 100440) (Methanococcus jannaschii).